The primary structure comprises 229 residues: Phosphatidylinositol N-acetylglucosaminyltransferase subunit GPI15 (229 aa).

The next 2 helical transmembrane spans lie at 59–79 and 101–121; these read IQYHQIVLILLLNILFYVICL and ILIIMGLFALGTIILVRGPSV.

Belongs to the PIGH family. As to quaternary structure, component of the phosphatidylinositol N-acetylglucosaminyltransferase (GPI-GlcNAc transferase) complex composed of at least GPI1, GPI2, GPI3, GPI15, GPI19 and ERI1.

The protein resides in the membrane. It carries out the reaction a 1,2-diacyl-sn-glycero-3-phospho-(1D-myo-inositol) + UDP-N-acetyl-alpha-D-glucosamine = a 6-(N-acetyl-alpha-D-glucosaminyl)-1-(1,2-diacyl-sn-glycero-3-phospho)-1D-myo-inositol + UDP + H(+). It functions in the pathway glycolipid biosynthesis; glycosylphosphatidylinositol-anchor biosynthesis. Its function is as follows. Part of the complex catalyzing the transfer of N-acetylglucosamine from UDP-N-acetylglucosamine to phosphatidylinositol, the first step of GPI biosynthesis. The polypeptide is Phosphatidylinositol N-acetylglucosaminyltransferase subunit GPI15 (GPI15) (Saccharomyces cerevisiae (strain ATCC 204508 / S288c) (Baker's yeast)).